The chain runs to 94 residues: Potassium channel protein kcv (94 aa).

Residues 14-34 (FMIHLFILAMFVMIYKFFPGG) traverse the membrane as a helical segment. Asparagine 38 carries N-linked (GlcNAc...) asparagine; by host glycosylation. Residues 74-94 (TGAKLCTIAHIVTVFFIVLTL) traverse the membrane as a helical segment.

Belongs to the two pore domain potassium channel (TC 1.A.1.12) family.

The protein localises to the membrane. Its function is as follows. Potassium-selective channel essential in the virus replication cycle. May be involved in preventing multiple infections (Potential). This chain is Potassium channel protein kcv (A250R), found in Paramecium bursaria Chlorella virus 1 (PBCV-1).